A 356-amino-acid chain; its full sequence is Tyrosine recombinase XerS (356 aa).

Residues 16 to 121 (LMPWFVLEYY…ALSSLYKYLT (106 aa)) form the Core-binding (CB) domain. The 186-residue stretch at 169-354 (KFLDYVENEY…VNDEQKNALD (186 aa)) folds into the Tyr recombinase domain. Active-site residues include arginine 210, lysine 234, histidine 306, arginine 309, and histidine 332. Tyrosine 341 functions as the O-(3'-phospho-DNA)-tyrosine intermediate in the catalytic mechanism.

It belongs to the 'phage' integrase family. XerS subfamily.

The protein resides in the cytoplasm. Its activity is regulated as follows. FtsK is required for recombination. Functionally, site-specific tyrosine recombinase, which acts by catalyzing the cutting and rejoining of the recombining DNA molecules. Essential to convert dimers of the bacterial chromosome into monomers to permit their segregation at cell division. In Streptococcus thermophilus (strain ATCC BAA-491 / LMD-9), this protein is Tyrosine recombinase XerS.